The primary structure comprises 116 residues: Large ribosomal subunit protein bL17 (116 aa).

It belongs to the bacterial ribosomal protein bL17 family. As to quaternary structure, part of the 50S ribosomal subunit. Contacts protein L32.

The protein is Large ribosomal subunit protein bL17 of Helicobacter pylori (strain P12).